The primary structure comprises 319 residues: Transaldolase (319 aa).

Lysine 132 (schiff-base intermediate with substrate) is an active-site residue.

It belongs to the transaldolase family. Type 1 subfamily. In terms of assembly, homodimer.

Its subcellular location is the cytoplasm. The enzyme catalyses D-sedoheptulose 7-phosphate + D-glyceraldehyde 3-phosphate = D-erythrose 4-phosphate + beta-D-fructose 6-phosphate. The protein operates within carbohydrate degradation; pentose phosphate pathway; D-glyceraldehyde 3-phosphate and beta-D-fructose 6-phosphate from D-ribose 5-phosphate and D-xylulose 5-phosphate (non-oxidative stage): step 2/3. Functionally, transaldolase is important for the balance of metabolites in the pentose-phosphate pathway. This is Transaldolase from Alteromonas mediterranea (strain DSM 17117 / CIP 110805 / LMG 28347 / Deep ecotype).